Consider the following 117-residue polypeptide: UPF0342 protein BcerKBAB4_0767 (117 aa).

It belongs to the UPF0342 family.

This chain is UPF0342 protein BcerKBAB4_0767, found in Bacillus mycoides (strain KBAB4) (Bacillus weihenstephanensis).